Reading from the N-terminus, the 396-residue chain is Probable sugar efflux transporter (396 aa).

A run of 12 helical transmembrane segments spans residues 15–35, 50–70, 81–101, 103–123, 136–156, 169–189, 209–229, 246–266, 275–295, 301–321, 333–353, and 364–384; these read VVTL…PVGL, VGIM…PFML, LICL…AWNF, VLVI…SITA, AQAL…GLPI, TFFA…KLLP, PALM…YTAY, FATV…LVFG, SLVS…LPAA, LAIL…GMQV, VAMA…ALVG, and AIGY…VLIF.

The protein belongs to the major facilitator superfamily. SotB (TC 2.A.1.2) family.

The protein localises to the cell inner membrane. Its function is as follows. Involved in the efflux of sugars. The physiological role may be the reduction of the intracellular concentration of toxic sugars or sugar metabolites. The polypeptide is Probable sugar efflux transporter (Salmonella paratyphi C (strain RKS4594)).